A 1295-amino-acid polypeptide reads, in one-letter code: Phosphoribosylformylglycinamidine synthase (1295 aa).

Positions 305 to 327 are disordered; it reads WPGAATGSGGEIRDEGATGRGAK. ATP contacts are provided by residues 307-318, 386-388, and Ala-678; these read GAATGSGGEIRD and TGY. Positions 679, 718, 722, and 884 each coordinate Mg(2+). Ser-886 contributes to the ATP binding site. Positions 1041–1295 constitute a Glutamine amidotransferase type-1 domain; it reads KVAVLREQGG…IFRNARKQLG (255 aa). The Nucleophile role is filled by Cys-1135. Residues His-1260 and Glu-1262 contribute to the active site.

It in the N-terminal section; belongs to the FGAMS family. In terms of assembly, monomer.

It is found in the cytoplasm. The enzyme catalyses N(2)-formyl-N(1)-(5-phospho-beta-D-ribosyl)glycinamide + L-glutamine + ATP + H2O = 2-formamido-N(1)-(5-O-phospho-beta-D-ribosyl)acetamidine + L-glutamate + ADP + phosphate + H(+). It participates in purine metabolism; IMP biosynthesis via de novo pathway; 5-amino-1-(5-phospho-D-ribosyl)imidazole from N(2)-formyl-N(1)-(5-phospho-D-ribosyl)glycinamide: step 1/2. Functionally, phosphoribosylformylglycinamidine synthase involved in the purines biosynthetic pathway. Catalyzes the ATP-dependent conversion of formylglycinamide ribonucleotide (FGAR) and glutamine to yield formylglycinamidine ribonucleotide (FGAM) and glutamate. The sequence is that of Phosphoribosylformylglycinamidine synthase from Salmonella choleraesuis (strain SC-B67).